A 243-amino-acid chain; its full sequence is Uridylate kinase (243 aa).

An ATP-binding site is contributed by 15–18 (KLSG). An involved in allosteric activation by GTP region spans residues 23 to 28 (GEEGFG). Residue glycine 57 participates in UMP binding. ATP is bound by residues glycine 58 and arginine 62. UMP-binding positions include aspartate 77 and 138-145 (TGNPFFTT). Residues threonine 165, phenylalanine 171, and aspartate 174 each contribute to the ATP site.

Belongs to the UMP kinase family. Homohexamer.

It is found in the cytoplasm. It catalyses the reaction UMP + ATP = UDP + ADP. It participates in pyrimidine metabolism; CTP biosynthesis via de novo pathway; UDP from UMP (UMPK route): step 1/1. With respect to regulation, allosterically activated by GTP. Inhibited by UTP. Functionally, catalyzes the reversible phosphorylation of UMP to UDP. This Vibrio campbellii (strain ATCC BAA-1116) protein is Uridylate kinase.